Reading from the N-terminus, the 322-residue chain is Prephenate dehydratase (322 aa).

One can recognise a Prephenate dehydratase domain in the interval 5–191; that stretch reads RIAYLGPEGT…ARTRFVLVGM (187 aa). The 78-residue stretch at 205–282 folds into the ACT domain; sequence SAVLRIDNAP…ADVCYLGSWP (78 aa). Residues 286–322 form a disordered region; it reads ATGPTVSPPPPDEASRWLARLRAGKPDQASEPGGGKL.

As to quaternary structure, homodimer.

The enzyme catalyses prephenate + H(+) = 3-phenylpyruvate + CO2 + H2O. It participates in amino-acid biosynthesis; L-phenylalanine biosynthesis; phenylpyruvate from prephenate: step 1/1. The sequence is that of Prephenate dehydratase (pheA) from Mycobacterium leprae (strain Br4923).